The primary structure comprises 396 residues: Proteasome-activating nucleotidase (396 aa).

Residues 16 to 57 (ITYLKRRIRQLELQVRMLEADKERLERELSRLRSEMSRLRQP) are a coiled coil. ATP-binding positions include 181-186 (GCGKTL) and histidine 320. The segment at 394–396 (IYG) is docks into pockets in the proteasome alpha-ring to cause gate opening.

The protein belongs to the AAA ATPase family. As to quaternary structure, homohexamer. The hexameric complex has a two-ring architecture resembling a top hat that caps the 20S proteasome core at one or both ends. Upon ATP-binding, the C-terminus of PAN interacts with the alpha-rings of the proteasome core by binding to the intersubunit pockets.

It localises to the cytoplasm. Its function is as follows. ATPase which is responsible for recognizing, binding, unfolding and translocation of substrate proteins into the archaeal 20S proteasome core particle. Is essential for opening the gate of the 20S proteasome via an interaction with its C-terminus, thereby allowing substrate entry and access to the site of proteolysis. Thus, the C-termini of the proteasomal ATPase function like a 'key in a lock' to induce gate opening and therefore regulate proteolysis. Unfolding activity requires energy from ATP hydrolysis, whereas ATP binding alone promotes ATPase-20S proteasome association which triggers gate opening, and supports translocation of unfolded substrates. The polypeptide is Proteasome-activating nucleotidase (Pyrococcus abyssi (strain GE5 / Orsay)).